Reading from the N-terminus, the 1358-residue chain is MAQTFTGRKRIRKFFGKIKEVAEMPNLIEVQKASYDQFLQIEEPKGGRDDDGLQAVFKSVFPISDFSGASMLEFVRYEFEPPKYDVDECRQRGMTFAAPLKVTLRLIVFDVDPETGAKSVKDIKEQDVYTGDIPLMTMNGTFIVNGTERVIVSQMHRSPGVFFDHDKGKTHSSGKLLFAARIIPYRGSWLDIEFDAKDIVFARIDRRRKIPVTSLLYALGLDNEEILSTFYEKIPFTREKGGWRMPFDPKRMKGYKAVADLIDADTGEVVLEAGKKLTVRAGRQLAEKGLKALKISDEEMIGQYIAEDLVDLTSGEIHAEAGEEITEKTLKLLEETGYNEIPVLDIDHVNTGAYIRNTLTADKNVTREDALFDIYRVMRPGEPPTLDSAQAMFHSLFFDSERYDLSAVGRVKMNMRLDLDCPDTVRVLRRDDILSVIRTLVELRDGKGEIDDIDHLGNRRVRSVGELMENQYRVGLLRMERAIKERMSSVDIDTVMPQDLINAKPVAAAVREFFGSSQLSQFMDQTNPLSEITHKRRLSALGPGGLTRERAGFEVRDVHPTHYGRICPIETPEGPNIGLINSLATFARVNKYGFIEAPYRRVVDSKVTDEVVYLSAMEEGKYYVAQANIPLDKDGRFEEDLIVCRHAGDVLLVAPDRVDFMDVSPKQLVSVAAALIPFLENDDANRALMGSNMQRQAVPLVRSQAPLVGTGMEAVVARDSGAAIAARRTGVIDQVDATRIVIRATEEADPSKSGVDIYRLMKFQRSNQSTCINQRPLVRVGDQVKKGDIIADGPSTELGELALGRNVLVAFMPWNGYNFEDSILLSENIAKEDVFTSIHIEEFEAMARDTKLGPEEITRDIPNVSEEALKNLDEAGIVYIGAEVRAGDILVGKITPKGESPMTPEEKLLRAIFGEKAADVRDTSLRLPPGTTGTIVEVRVFNRHGVDKDERALAIEREEIERLAKDRDDEQAILDRNVYGRLIEILDGKTAIAGPKGFRKETVVTREILTEYPRSQWWLFAVADDAIMAELEAIRAQYDDSKKRLEQRFLDKVEKLQRGDELPPGVMKMVKVFVAVKRKIQPGDKMAGRHGNKGVVSRIVPVEDMPFLEDGTNVDIVLNPLGVPSRMNVGQILETHLGWACAGLGRQVAAAMEAYYGKQDLKPLRDRLETIYGKDEIEQLKDGELPELGENLRKGVPMATPVFDGAHEADIEQQLEKAGLDASGQSTLYDGRTGEPFDRKVTVGYIYMLKLHHLVDDKIHARSIGPYSLVTQQPLGGKAQFGGQRFGEMEVWALEAYGAAYTLQEMLTVKSDDVAGRTKVYEAIVRGEDTFESGIPESFNVLVKEMRSLGLNVDLENS.

The protein belongs to the RNA polymerase beta chain family. The RNAP catalytic core consists of 2 alpha, 1 beta, 1 beta' and 1 omega subunit. When a sigma factor is associated with the core the holoenzyme is formed, which can initiate transcription.

It carries out the reaction RNA(n) + a ribonucleoside 5'-triphosphate = RNA(n+1) + diphosphate. DNA-dependent RNA polymerase catalyzes the transcription of DNA into RNA using the four ribonucleoside triphosphates as substrates. This is DNA-directed RNA polymerase subunit beta from Xanthobacter autotrophicus (strain ATCC BAA-1158 / Py2).